Reading from the N-terminus, the 227-residue chain is 2,3-bisphosphoglycerate-dependent phosphoglycerate mutase (227 aa).

Residues 7–14 (RHGQSEWN), 20–21 (TG), R59, 86–89 (ERHY), K97, 113–114 (RR), and 182–183 (GN) each bind substrate. The active-site Tele-phosphohistidine intermediate is the H8. The Proton donor/acceptor role is filled by E86.

Belongs to the phosphoglycerate mutase family. BPG-dependent PGAM subfamily. Homodimer.

The enzyme catalyses (2R)-2-phosphoglycerate = (2R)-3-phosphoglycerate. It functions in the pathway carbohydrate degradation; glycolysis; pyruvate from D-glyceraldehyde 3-phosphate: step 3/5. In terms of biological role, catalyzes the interconversion of 2-phosphoglycerate and 3-phosphoglycerate. The protein is 2,3-bisphosphoglycerate-dependent phosphoglycerate mutase of Neisseria meningitidis serogroup C / serotype 2a (strain ATCC 700532 / DSM 15464 / FAM18).